A 94-amino-acid chain; its full sequence is CRISPR-associated endoribonuclease Cas2 1 (94 aa).

Residue Asp-8 participates in Mg(2+) binding.

It belongs to the CRISPR-associated endoribonuclease Cas2 protein family. Homodimer, forms a heterotetramer with a Cas1 homodimer. Mg(2+) serves as cofactor.

CRISPR (clustered regularly interspaced short palindromic repeat), is an adaptive immune system that provides protection against mobile genetic elements (viruses, transposable elements and conjugative plasmids). CRISPR clusters contain sequences complementary to antecedent mobile elements and target invading nucleic acids. CRISPR clusters are transcribed and processed into CRISPR RNA (crRNA). Involved in the integration of spacer DNA into the CRISPR cassette. Functions as a ssRNA-specific endoribonuclease. This chain is CRISPR-associated endoribonuclease Cas2 1 (cas21), found in Archaeoglobus fulgidus (strain ATCC 49558 / DSM 4304 / JCM 9628 / NBRC 100126 / VC-16).